The chain runs to 355 residues: Protein RecA (355 aa).

ATP is bound at residue 67-74 (GPESSGKT). The tract at residues 331–355 (NQDDKPDFTPAAHEVDEGSEAKENF) is disordered.

The protein belongs to the RecA family.

The protein localises to the cytoplasm. Can catalyze the hydrolysis of ATP in the presence of single-stranded DNA, the ATP-dependent uptake of single-stranded DNA by duplex DNA, and the ATP-dependent hybridization of homologous single-stranded DNAs. It interacts with LexA causing its activation and leading to its autocatalytic cleavage. The sequence is that of Protein RecA from Erwinia tasmaniensis (strain DSM 17950 / CFBP 7177 / CIP 109463 / NCPPB 4357 / Et1/99).